Consider the following 200-residue polypeptide: Recombination protein RecR (200 aa).

A C4-type zinc finger spans residues 57–72 (CRQCRTLTEQELCPQC). The 96-residue stretch at 80 to 175 (TQLCVVEGPM…VASRIAHGVP (96 aa)) folds into the Toprim domain.

Belongs to the RecR family.

In terms of biological role, may play a role in DNA repair. It seems to be involved in an RecBC-independent recombinational process of DNA repair. It may act with RecF and RecO. This Pseudomonas putida (strain W619) protein is Recombination protein RecR.